The primary structure comprises 124 residues: Membrane-anchored ubiquitin-fold protein 2 (124 aa).

Residues 8 to 74 (LEIKFRLNDG…LENNKTVGDC (67 aa)) enclose the Ubiquitin-like domain. 4 S-palmitoyl cysteine lipidation sites follow: Cys-115, Cys-117, Cys-119, and Cys-124.

In terms of processing, acylated protein. Probably modified with palmitate. As to expression, ubiquitous, but three fold higher expression in stamens.

It is found in the cell membrane. Its function is as follows. May serve as docking site to facilitate the association of other proteins to the plasma membrane. The protein is Membrane-anchored ubiquitin-fold protein 2 (MUB2) of Arabidopsis thaliana (Mouse-ear cress).